The chain runs to 718 residues: Scarecrow-like protein 9 (718 aa).

Positions 305 to 338 (VEKKKASDAQGGKRRARGRGRGRGRGGGGGQNGK) are disordered. A compositionally biased stretch (basic residues) spans 316–328 (GKRRARGRGRGRG). One can recognise a GRAS domain in the interval 335–713 (QNGKKEVVDL…RTVMALSVWK (379 aa)). The leucine repeat I (LRI) stretch occupies residues 342–402 (VDLRSLLIHC…EARLAGTGSQ (61 aa)). Positions 421–484 (HQLFLACCPF…YGSPKVRITG (64 aa)) are VHIID. The VHIID motif lies at 452–456 (VHVID). The segment at 500-532 (ETGQRLAAYAKLFGVPFEYKAIAKKWDAIQLED) is leucine repeat II (LRII). Residues 541-635 (TVVNCLYRAE…MEVFGREALN (95 aa)) are PFYRE. Residues 638 to 713 (ACEGWERVER…RTVMALSVWK (76 aa)) are SAW.

The protein belongs to the GRAS family. As to expression, expressed in cotyledons, leaves and flowers, and in the elongation zone in root.

Its subcellular location is the nucleus. Its function is as follows. Probable transcription factor involved in plant development. The polypeptide is Scarecrow-like protein 9 (SCL9) (Arabidopsis thaliana (Mouse-ear cress)).